The following is a 77-amino-acid chain: Large ribosomal subunit protein bL28 (77 aa).

It belongs to the bacterial ribosomal protein bL28 family.

In Verminephrobacter eiseniae (strain EF01-2), this protein is Large ribosomal subunit protein bL28.